The sequence spans 218 residues: Large ribosomal subunit protein uL4 (218 aa).

The segment at glycine 54–glutamine 106 is disordered.

Belongs to the universal ribosomal protein uL4 family. In terms of assembly, part of the 50S ribosomal subunit.

In terms of biological role, one of the primary rRNA binding proteins, this protein initially binds near the 5'-end of the 23S rRNA. It is important during the early stages of 50S assembly. It makes multiple contacts with different domains of the 23S rRNA in the assembled 50S subunit and ribosome. Functionally, forms part of the polypeptide exit tunnel. In Bifidobacterium animalis subsp. lactis (strain AD011), this protein is Large ribosomal subunit protein uL4.